Here is a 313-residue protein sequence, read N- to C-terminus: Acetaldehyde dehydrogenase 1 (313 aa).

S16 to I19 lines the NAD(+) pocket. Residue C131 is the Acyl-thioester intermediate of the active site. NAD(+) is bound by residues S162–N170 and N281.

It belongs to the acetaldehyde dehydrogenase family.

The enzyme catalyses acetaldehyde + NAD(+) + CoA = acetyl-CoA + NADH + H(+). The chain is Acetaldehyde dehydrogenase 1 from Mycobacterium sp. (strain JLS).